The chain runs to 194 residues: dCTP deaminase (194 aa).

Residues 110–115 (RSSLAR), aspartate 128, 136–138 (VLE), tyrosine 171, lysine 178, and glutamine 182 each bind dCTP. The Proton donor/acceptor role is filled by glutamate 138.

Belongs to the dCTP deaminase family. As to quaternary structure, homotrimer.

The enzyme catalyses dCTP + H2O + H(+) = dUTP + NH4(+). Its pathway is pyrimidine metabolism; dUMP biosynthesis; dUMP from dCTP (dUTP route): step 1/2. Its function is as follows. Catalyzes the deamination of dCTP to dUTP. The sequence is that of dCTP deaminase from Psychromonas ingrahamii (strain DSM 17664 / CCUG 51855 / 37).